We begin with the raw amino-acid sequence, 453 residues long: Exodeoxyribonuclease 7 large subunit (453 aa).

It belongs to the XseA family. Heterooligomer composed of large and small subunits.

Its subcellular location is the cytoplasm. It carries out the reaction Exonucleolytic cleavage in either 5'- to 3'- or 3'- to 5'-direction to yield nucleoside 5'-phosphates.. In terms of biological role, bidirectionally degrades single-stranded DNA into large acid-insoluble oligonucleotides, which are then degraded further into small acid-soluble oligonucleotides. This is Exodeoxyribonuclease 7 large subunit from Rickettsia typhi (strain ATCC VR-144 / Wilmington).